The chain runs to 157 residues: Subgroup A Rous sarcoma virus receptor pg950 (157 aa).

A signal peptide spans 1-19 (MARLLPALLLLLLPGNVTG). Asn-20 and Asn-24 each carry an N-linked (GlcNAc...) asparagine glycan. Over 20–102 (NGSGNGSLSR…RALPARNHGR (83 aa)) the chain is Extracellular. Positions 28-71 (SRCPPGQFRCSEPPGAHGECYPQDWLCDGHPDCDDGRDEWGCGT) constitute an LDL-receptor class A domain. Intrachain disulfides connect Cys-30–Cys-47, Cys-37–Cys-60, and Cys-54–Cys-69. An N-linked (GlcNAc...) asparagine glycan is attached at Asn-81. The helical transmembrane segment at 103–125 (MWMLITAVLLCCLVAVGGIAAWG) threads the bilayer. Residues 126 to 157 (KSKAKSRSDIFSLASASKELLVPDKSQADLFS) are Cytoplasmic-facing.

In terms of assembly, (Microbial infection) Interacts with Rous sarcoma virus envelope protein; this interaction allows the viral attachment.

The protein localises to the membrane. In terms of biological role, responsible for susceptibility to the retrovirus subgroup A Rous sarcoma virus. This is Subgroup A Rous sarcoma virus receptor pg950 from Coturnix japonica (Japanese quail).